Here is a 135-residue protein sequence, read N- to C-terminus: Probable 5-hydroxyisourate hydrolase R09H10.3 (135 aa).

The N-terminal stretch at Met1–Ser20 is a signal peptide. Residues His30, Arg68, and Tyr132 each contribute to the substrate site.

This sequence belongs to the transthyretin family. 5-hydroxyisourate hydrolase subfamily. In terms of assembly, homotetramer.

The enzyme catalyses 5-hydroxyisourate + H2O = 5-hydroxy-2-oxo-4-ureido-2,5-dihydro-1H-imidazole-5-carboxylate + H(+). In terms of biological role, catalyzes the hydrolysis of 5-hydroxyisourate (HIU) to 2-oxo-4-hydroxy-4-carboxy-5-ureidoimidazoline (OHCU). This chain is Probable 5-hydroxyisourate hydrolase R09H10.3, found in Caenorhabditis elegans.